Consider the following 515-residue polypeptide: Serine/threonine-protein kinase STE7 (515 aa).

Residues 191 to 466 enclose the Protein kinase domain; sequence LVQLGKIGAG…IHELLHHDLI (276 aa). ATP-binding positions include 197–205 and K220; that span reads IGAGNSGTV. The Proton acceptor role is filled by D331. S359 is modified (phosphoserine). Residue T363 is modified to Phosphothreonine.

Belongs to the protein kinase superfamily. STE Ser/Thr protein kinase family. MAP kinase kinase subfamily.

The catalysed reaction is L-seryl-[protein] + ATP = O-phospho-L-seryl-[protein] + ADP + H(+). The enzyme catalyses L-threonyl-[protein] + ATP = O-phospho-L-threonyl-[protein] + ADP + H(+). It catalyses the reaction L-tyrosyl-[protein] + ATP = O-phospho-L-tyrosyl-[protein] + ADP + H(+). With respect to regulation, phosphorylated at multiple sites in response to pheromone. In terms of biological role, serine/threonine protein kinase required for cell-type-specific transcription and signal transduction in yeast. It is thought that it is phosphorylated by the ste11 protein kinase and that it can phosphorylate the FUS3 and or KSS1 kinases. The protein is Serine/threonine-protein kinase STE7 (STE7) of Saccharomyces cerevisiae (strain ATCC 204508 / S288c) (Baker's yeast).